The chain runs to 259 residues: Imidazole glycerol phosphate synthase subunit HisF (259 aa).

Catalysis depends on residues D11 and D130.

Belongs to the HisA/HisF family. Heterodimer of HisH and HisF.

The protein localises to the cytoplasm. It carries out the reaction 5-[(5-phospho-1-deoxy-D-ribulos-1-ylimino)methylamino]-1-(5-phospho-beta-D-ribosyl)imidazole-4-carboxamide + L-glutamine = D-erythro-1-(imidazol-4-yl)glycerol 3-phosphate + 5-amino-1-(5-phospho-beta-D-ribosyl)imidazole-4-carboxamide + L-glutamate + H(+). The protein operates within amino-acid biosynthesis; L-histidine biosynthesis; L-histidine from 5-phospho-alpha-D-ribose 1-diphosphate: step 5/9. Its function is as follows. IGPS catalyzes the conversion of PRFAR and glutamine to IGP, AICAR and glutamate. The HisF subunit catalyzes the cyclization activity that produces IGP and AICAR from PRFAR using the ammonia provided by the HisH subunit. The sequence is that of Imidazole glycerol phosphate synthase subunit HisF from Polaromonas naphthalenivorans (strain CJ2).